The following is a 510-amino-acid chain: Serine/threonine protein phosphatase 2A 57 kDa regulatory subunit B' kappa isoform (510 aa).

Residues 1 to 51 form a disordered region; it reads MWKGFLSKLPRKTSASGRGADLDSGQCSNGAGNGNPIQRTSSCGSIPSGRS. Positions 25 to 51 are enriched in polar residues; the sequence is GQCSNGAGNGNPIQRTSSCGSIPSGRS. 2 positions are modified to phosphothreonine: threonine 476 and threonine 493. Phosphoserine is present on serine 502. A Phosphothreonine modification is found at threonine 508.

The protein belongs to the phosphatase 2A regulatory subunit B56 family. As to quaternary structure, PP2A consists of a common heteromeric enzyme, composed of a catalytic subunit (subunits C), a constant regulatory subunit (subunit A), and a variety of regulatory subunits such as subunits B (the R2/B/PR55/B55, R3/B''/PR72/PR130/PR59 and R5/B'/B56 families). Interacts with SIT1. In terms of processing, phosphorylated at Thr-476, Thr-493, Ser-502 and Thr-508 by SIT1. In terms of tissue distribution, expressed in root stele and epidermal cells.

It localises to the cytoplasm. Its subcellular location is the cytosol. The protein localises to the cell membrane. Its function is as follows. B regulatory subunit of phosphatase 2A (PP2A) involved in salt stress response. Under salt stress conditions, required for the catalytic activity of PP2A and the dephosphorylation of SIT1, a negative regulator of salt tolerance. Dephosphorylation of SIT1 turns off salt-induced SIT1 activity directly, which has a positive effect on salt tolerance. This Oryza sativa subsp. japonica (Rice) protein is Serine/threonine protein phosphatase 2A 57 kDa regulatory subunit B' kappa isoform.